The primary structure comprises 67 residues: Small, acid-soluble spore protein B (67 aa).

Belongs to the alpha/beta-type SASP family.

Its function is as follows. SASP are bound to spore DNA. They are double-stranded DNA-binding proteins that cause DNA to change to an a-like conformation. They protect the DNA backbone from chemical and enzymatic cleavage and are thus involved in dormant spore's high resistance to UV light. The sequence is that of Small, acid-soluble spore protein B (sspB) from Bacillus subtilis (strain 168).